Here is a 235-residue protein sequence, read N- to C-terminus: Sugar fermentation stimulation protein homolog (235 aa).

Belongs to the SfsA family.

The sequence is that of Sugar fermentation stimulation protein homolog from Nitrosococcus oceani (strain ATCC 19707 / BCRC 17464 / JCM 30415 / NCIMB 11848 / C-107).